We begin with the raw amino-acid sequence, 317 residues long: Ribosomal RNA small subunit methyltransferase H (317 aa).

Residues 39–41 (GGH), Asp59, Phe83, Asp104, and Gln111 contribute to the S-adenosyl-L-methionine site.

It belongs to the methyltransferase superfamily. RsmH family.

It localises to the cytoplasm. It catalyses the reaction cytidine(1402) in 16S rRNA + S-adenosyl-L-methionine = N(4)-methylcytidine(1402) in 16S rRNA + S-adenosyl-L-homocysteine + H(+). Specifically methylates the N4 position of cytidine in position 1402 (C1402) of 16S rRNA. In Paraburkholderia phytofirmans (strain DSM 17436 / LMG 22146 / PsJN) (Burkholderia phytofirmans), this protein is Ribosomal RNA small subunit methyltransferase H.